A 505-amino-acid polypeptide reads, in one-letter code: 2,3-bisphosphoglycerate-independent phosphoglycerate mutase (505 aa).

Mn(2+)-binding residues include Asp-13 and Ser-63. Ser-63 (phosphoserine intermediate) is an active-site residue. Residues His-124, 153–154 (RD), Arg-183, Arg-189, 254–257 (RADR), and Lys-330 contribute to the substrate site. 5 residues coordinate Mn(2+): Asp-396, His-400, Asp-437, His-438, and His-456.

The protein belongs to the BPG-independent phosphoglycerate mutase family. Monomer. Mn(2+) serves as cofactor.

It carries out the reaction (2R)-2-phosphoglycerate = (2R)-3-phosphoglycerate. Its pathway is carbohydrate degradation; glycolysis; pyruvate from D-glyceraldehyde 3-phosphate: step 3/5. Catalyzes the interconversion of 2-phosphoglycerate and 3-phosphoglycerate. The sequence is that of 2,3-bisphosphoglycerate-independent phosphoglycerate mutase from Roseobacter denitrificans (strain ATCC 33942 / OCh 114) (Erythrobacter sp. (strain OCh 114)).